The chain runs to 1243 residues: MSEAPRFFVGPEDTEINPGNYRHFFHHADEDDEEEDDSPPERQIVVGICSMAKKSKSKPMKEILERISLFKYITVVVFEEEVILNEPVENWPLCDCLISFHSKGFPLDKAVAYAKLRNPFVINDLNMQYLIQDRREVYSILQAEGILLPRYAILNRDPNNPKECNLIEGEDHVEVNGEVFQKPFVEKPVSAEDHNVYIYYPTSAGGGSQRLFRKIGSRSSVYSPESNVRKTGSYIYEEFMPTDGTDVKVYTVGPDYAHAEARKSPALDGKVERDSEGKEVRYPVILNAREKLIAWKVCLAFKQTVCGFDLLRANGQSYVCDVNGFSFVKNSMKYYDDCAKILGNIVMRELAPQFHIPWSIPLEAEDIPIVPTTSGTMMELRCVIAVIRHGDRTPKQKMKMEVRHQKFFDLFEKCDGYKSGKLKLKKPKQLQEVLDIARQLLMELGQNNDSEIEENKPKLEQLKTVLEMYGHFSGINRKVQLTYLPHGCPKTSSEEEDSRREEPSLLLVLKWGGELTPAGRVQAEELGRAFRCMYPGGQGDYAGFPGCGLLRLHSTYRHDLKIYASDEGRVQMTAAAFAKGLLALEGELTPILVQMVKSANMNGLLDSDSDSLSSCQQRVKARLHEILQKDRDFTAEDYEKLTPSGSISLIKSMHLIKNPVKTCDKVYSLIQSLTSQIRHRMEDPKSSDIQLYHSETLELMLRRWSKLEKDFKTKNGRYDISKIPDIYDCIKYDVQHNGSLKLENTMELYRLSKALADIVIPQEYGITKAEKLEIAKGYCTPLVRKIRSDLQRTQDDDTVNKLHPVYSRGVLSPERHVRTRLYFTSESHVHSLLSILRYGALCNESKDEQWKRAMDYLNVVNELNYMTQIVIMLYEDPNKDLSSEERFHVELHFSPGAKGCEEDKNLPSGYGYRPASRENEGRRPFKIDNDDEPHTSKRDEVDRAVILFKPMVSEPIHIHRKSPLPRSRKTATNDEESPLSVSSPEGTGTWLHYTSGVGTGRRRRRSGEQITSSPVSPKSLAFTSSIFGSWQQVVSENANYLRTPRTLVEQKQNPTVGSHCAGLFSTSVLGGSSSAPNLQDYARTHRKKLTSSGCIDDATRGSAVKRFSISFARHPTNGFELYSMVPSICPLETLHNALSLKQVDEFLASIASPSSDVPRKTAEISSTALRSSPIMRKKVSLNTYTPAKILPTPPATLKSTKASSKPATSGPSSAVVPNTSSRKKNITSKTETHEHKKNTGKKK.

Phosphoserine is present on Ser-38. 53 to 54 (KK) contributes to the substrate binding site. ATP-binding residues include Arg-134, Lys-187, His-194, and Arg-213. Substrate is bound at residue 213–214 (RK). At Ser-223 the chain carries Phosphoserine. ATP contacts are provided by residues 237-240 (EEFM) and 246-248 (DVK). Lys-248 and Arg-262 together coordinate substrate. ATP-binding positions include Ser-264, Asp-309, and 321 to 323 (DVN). 326–329 (SFVK) is a substrate binding site. Residues 371–442 (PTTSGTMMEL…VLDIARQLLM (72 aa)) are polyphosphoinositide-binding domain. Disordered stretches follow at residues 898–941 (KGCE…RDEV) and 957–1016 (HIHR…SPVS). The segment covering 915–941 (ASRENEGRRPFKIDNDDEPHTSKRDEV) has biased composition (basic and acidic residues). The span at 958 to 969 (IHRKSPLPRSRK) shows a compositional bias: basic residues. Residues Ser-1006, Ser-1016, Ser-1074, Ser-1091, Ser-1165, Ser-1172, and Ser-1180 each carry the phosphoserine modification. The tract at residues 1185–1243 (TPAKILPTPPATLKSTKASSKPATSGPSSAVVPNTSSRKKNITSKTETHEHKKNTGKKK) is disordered. The span at 1195 to 1209 (ATLKSTKASSKPATS) shows a compositional bias: low complexity. A compositionally biased stretch (polar residues) spans 1210 to 1220 (GPSSAVVPNTS). A phosphoserine mark is found at Ser-1220 and Ser-1221.

The protein belongs to the histidine acid phosphatase family. VIP1 subfamily.

The protein localises to the cytoplasm. It is found in the cytosol. The catalysed reaction is 1D-myo-inositol hexakisphosphate + ATP = 1-diphospho-1D-myo-inositol 2,3,4,5,6-pentakisphosphate + ADP. The enzyme catalyses 5-diphospho-1D-myo-inositol 1,2,3,4,6-pentakisphosphate + ATP + H(+) = 1,5-bis(diphospho)-1D-myo-inositol 2,3,4,6-tetrakisphosphate + ADP. In terms of biological role, bifunctional inositol kinase that acts in concert with the IP6K kinases IP6K1, IP6K2 and IP6K3 to synthesize the diphosphate group-containing inositol pyrophosphates diphosphoinositol pentakisphosphate, PP-InsP5, and bis-diphosphoinositol tetrakisphosphate, (PP)2-InsP4. PP-InsP5 and (PP)2-InsP4, also respectively called InsP7 and InsP8, regulate a variety of cellular processes, including apoptosis, vesicle trafficking, cytoskeletal dynamics, exocytosis, insulin signaling and neutrophil activation. Phosphorylates inositol hexakisphosphate (InsP6) at position 1 to produce PP-InsP5 which is in turn phosphorylated by IP6Ks to produce (PP)2-InsP4. Alternatively, phosphorylates PP-InsP5 at position 1, produced by IP6Ks from InsP6, to produce (PP)2-InsP4. Required for normal hearing. The polypeptide is Inositol hexakisphosphate and diphosphoinositol-pentakisphosphate kinase 2 (Homo sapiens (Human)).